The following is a 440-amino-acid chain: MQQLFSQHIARIQQIVQHALELARLDGLWIYAGQAKYHFLDDQTSPFKINPHFNYIFPDPTVEQSWLFLDGKNKPKLYFYAPQDYWHCTPNPPTSAFFADEFEWQMLTDSQQIQQYIINPTHCAFIGEQTELAKSLGFEHINPQKVLNVLHFERSIKSEFEIECIYQAQLTALAGHHAAKEAFFASKSEFEINLAYLQATKQSDNNVPYGNIVAINQHSAILHYTKLDFTPPCERHSFLLDAGTSYLGYASDLTRTYAFEPQSEFAAMIAQMEQFKLDTIADMQVGMNYLSYHTQMHRWISQMLHQFEFVKLPADQIFEEGISRTFFPHGLGHQLGLQVHDVAGFQQNHRGTRKAPPEIYPSLRCTRDLAEGMVLTIEPGFYFIEMLLNQWKNHPLAPFFNWQKIDEFKRYGGIRTEDNIVMRATGAENLTAKAESISSR.

Residues Asp241, Asp252, His333, Glu378, and Glu417 each coordinate Mn(2+).

This sequence belongs to the peptidase M24B family. Bacterial-type prolidase subfamily. Requires Mn(2+) as cofactor.

It catalyses the reaction Xaa-L-Pro dipeptide + H2O = an L-alpha-amino acid + L-proline. Functionally, splits dipeptides with a prolyl residue in the C-terminal position. The chain is Xaa-Pro dipeptidase from Glaesserella parasuis serovar 5 (strain SH0165) (Haemophilus parasuis).